The sequence spans 551 residues: Cation/acetate symporter ActP (551 aa).

A run of 13 helical transmembrane segments spans residues 34-54 (IEAIVMFVLFVGATLYITYWA), 77-97 (GLAIAGDFMSAASFLGISALV), 104-124 (GLIYSIGFLIGWPIILFLIAE), 150-170 (LSACGSLVVVALYLIAQMVGA), 184-204 (VAVVLVGILMVMYVLFGGMLA), 207-227 (WVQIIKAVLLLAGASFMALMV), 263-283 (ISALSLGLALMFGTAGLPHIL), 304-324 (GFIGYFYILTFIIGFGAILLV), 356-376 (FFLGFISAVAFATILAVVAGL), 406-426 (VSKITVVVLGFVAIGLGILFE), 430-450 (IAFMVGLAFSIAASCNFPIIF), 469-489 (LGLLTAVILMILGPTIWVTIL), and 498-518 (YEYPALFSMIVAFVGIWFFSI).

This sequence belongs to the sodium:solute symporter (SSF) (TC 2.A.21) family.

It is found in the cell inner membrane. Transports acetate. This Yersinia enterocolitica serotype O:8 / biotype 1B (strain NCTC 13174 / 8081) protein is Cation/acetate symporter ActP.